A 316-amino-acid chain; its full sequence is Homoserine kinase (316 aa).

ATP is bound at residue 97 to 107 (PHSRGLGSSAA).

Belongs to the GHMP kinase family. Homoserine kinase subfamily.

Its subcellular location is the cytoplasm. The enzyme catalyses L-homoserine + ATP = O-phospho-L-homoserine + ADP + H(+). It functions in the pathway amino-acid biosynthesis; L-threonine biosynthesis; L-threonine from L-aspartate: step 4/5. Catalyzes the ATP-dependent phosphorylation of L-homoserine to L-homoserine phosphate. This is Homoserine kinase from Mycobacterium tuberculosis (strain ATCC 25618 / H37Rv).